The primary structure comprises 199 residues: Dephospho-CoA kinase (199 aa).

Residues 11–199 (RIGLTGGIAS…DLHDQLDALL (189 aa)) form the DPCK domain. 19 to 24 (ASGKSS) serves as a coordination point for ATP.

Belongs to the CoaE family.

The protein localises to the cytoplasm. The enzyme catalyses 3'-dephospho-CoA + ATP = ADP + CoA + H(+). It participates in cofactor biosynthesis; coenzyme A biosynthesis; CoA from (R)-pantothenate: step 5/5. Its function is as follows. Catalyzes the phosphorylation of the 3'-hydroxyl group of dephosphocoenzyme A to form coenzyme A. The chain is Dephospho-CoA kinase from Synechococcus sp. (strain CC9902).